The primary structure comprises 118 residues: Small ribosomal subunit protein uS13 (118 aa).

The disordered stretch occupies residues 94 to 118; it reads GLPVRGQRTKTNARTRKGPRKPIKK.

This sequence belongs to the universal ribosomal protein uS13 family. As to quaternary structure, part of the 30S ribosomal subunit. Forms a loose heterodimer with protein S19. Forms two bridges to the 50S subunit in the 70S ribosome.

In terms of biological role, located at the top of the head of the 30S subunit, it contacts several helices of the 16S rRNA. In the 70S ribosome it contacts the 23S rRNA (bridge B1a) and protein L5 of the 50S subunit (bridge B1b), connecting the 2 subunits; these bridges are implicated in subunit movement. Contacts the tRNAs in the A and P-sites. The protein is Small ribosomal subunit protein uS13 of Haemophilus ducreyi (strain 35000HP / ATCC 700724).